We begin with the raw amino-acid sequence, 666 residues long: Probable cytochrome c oxidase subunit 1 (666 aa).

2 consecutive transmembrane segments (helical) span residues 16–36 and 57–77; these read IPLIAGAVVLVAILAVLVWVV and IGVMYILLASIMLLRGGSDAI. His105 is a binding site for heme b. Transmembrane regions (helical) follow at residues 108–128, 142–162, 192–212, 234–254, 277–297, 315–335, 346–366, 380–400, 413–433, 456–476, 493–513, 591–611, and 612–632; these read IMIFFVAMPFVIGLMNLVVPL, SVGFWLTATGALLVNLSLVIG, SLQISGVGTLVAGINLVTTVL, SNLLIVAAFPILTATLAMLLL, LIWAWGHPEVYILVLPAFGIF, MVLATMAICVISFMVWLHHFF, IFGIASMIIAVPTGVKIYNWL, MLWAVGFMVTFIIGGLTGVLV, MFLVAHFHNVIIGGVLFGAFA, FWFTFLGFYVTFMPLYIAGML, WMLVAAAGMAVLTIGVICQIM, SPTGFICAFFATIMGFALIWH, and IWWMVILGGIGAFATFVVFAW. The Cu cation site is built by His283, Tyr287, His332, and His333. The 1'-histidyl-3'-tyrosine (His-Tyr) cross-link spans 283–287; that stretch reads HPEVY. Heme b is bound by residues His418 and His420.

This sequence belongs to the heme-copper respiratory oxidase family.

It is found in the cell membrane. It catalyses the reaction 4 Fe(II)-[cytochrome c] + O2 + 8 H(+)(in) = 4 Fe(III)-[cytochrome c] + 2 H2O + 4 H(+)(out). Its pathway is energy metabolism; oxidative phosphorylation. In Bradyrhizobium diazoefficiens (strain JCM 10833 / BCRC 13528 / IAM 13628 / NBRC 14792 / USDA 110), this protein is Probable cytochrome c oxidase subunit 1.